The sequence spans 708 residues: Glutamate--tRNA ligase, cytoplasmic (708 aa).

2 interaction with ARC1 regions span residues 106 to 115 and 141 to 157; these read NLRTFILGGL and KVDV…EMDP. Residue 205–207 coordinates L-glutamate; the sequence is RFP. The short motif at 210–219 is the 'HIGH' region element; the sequence is PSGYLHIGHA. His-215 lines the ATP pocket. Asp-241 serves as a coordination point for L-glutamate. At Thr-300 the chain carries Phosphothreonine. L-glutamate contacts are provided by residues 382-386 and Arg-400; that span reads YDFCV. Residues Glu-403 and 437–441 contribute to the ATP site; that span reads LLSKR. The 'KMSKS' region signature appears at 437-441; sequence LLSKR.

It belongs to the class-I aminoacyl-tRNA synthetase family. Glutamate--tRNA ligase type 2 subfamily. As to quaternary structure, component of a yeast aminoacyl-tRNA synthase (aaRS) complex formed by methionyl-tRNA synthase MES1, glutamyl-tRNA synthase GUS1 and the tRNA aminoacylation cofactor ARC1 in a stoichiometric complex. Interacts (via N-ter) with ARC1 (via N-ter). Can also form a stable binary complex with ARC1 that is functional in terms of aminoacylation. ARC1 increases the affinity for cognate tRNAs due to the presence of a tRNA binding domain in the middle and C-terminal part of ARC1.

It localises to the cytoplasm. Its subcellular location is the mitochondrion. The catalysed reaction is tRNA(Glu) + L-glutamate + ATP = L-glutamyl-tRNA(Glu) + AMP + diphosphate. In terms of biological role, catalyzes the attachment of glutamate to tRNA(Glu) in a two-step reaction: glutamate is first activated by ATP to form Glu-AMP and then transferred to the acceptor end of tRNA(Glu). In mitochondria, constitutes the nondiscriminating glutamyl-tRNA synthase that generates the mitochondrial mischarged glutamyl-tRNA(Gln) substrate for the tRNA-dependent amidotransferase (AdT), which generates mitochondrial glutaminyl-tRNA(Gln) by transamidation of glutamyl-tRNA(Gln). This Saccharomyces cerevisiae (strain ATCC 204508 / S288c) (Baker's yeast) protein is Glutamate--tRNA ligase, cytoplasmic (GUS1).